The following is a 449-amino-acid chain: uncharacterized protein (449 aa).

Ser420 is subject to Phosphoserine.

Belongs to the NAD kinase family.

Its subcellular location is the cytoplasm. It is found in the nucleus. This is an uncharacterized protein from Schizosaccharomyces pombe (strain 972 / ATCC 24843) (Fission yeast).